Consider the following 207-residue polypeptide: MSSVIAQKDENVVWHQHAVTKTQRADLKQQKPAVLWFTGLSGAGKSTVAGALENRLAEQGFHTYLLDGDNVRHGLCSDLGFSTQDRRENIRRIGELAKLMADAGLIVLTAFISPHRAERQLVRDLLPEGEFIEVFVNTSLEVCEQRDPKGLYKKARAGEIANFTGIDSEYEVPLNPEIDLPAGEKGIEALVDLLVEQLTLRGVISPR.

39 to 46 (GLSGAGKS) serves as a coordination point for ATP. Ser-113 (phosphoserine intermediate) is an active-site residue.

Belongs to the APS kinase family.

It catalyses the reaction adenosine 5'-phosphosulfate + ATP = 3'-phosphoadenylyl sulfate + ADP + H(+). It functions in the pathway sulfur metabolism; hydrogen sulfide biosynthesis; sulfite from sulfate: step 2/3. Its function is as follows. Catalyzes the synthesis of activated sulfate. This is Adenylyl-sulfate kinase from Vibrio vulnificus (strain CMCP6).